The following is a 426-amino-acid chain: MLDSKLLRTQLQDVADRLASRGFTLDVARIESLEAQRKVVQTRTEQLQAERNARSKSIGQAKQRGEDIAPLMADVERMGNELSEGKVELDGIQAELDALVLSIPNLPHESVPVGADEEGNVEVRRWGTPTAFDFEVKDHVALGEKFGWLDFETAAKLSGARFALLRGPIARLHRALAQFMINLHINEHGYEETYTPYLVQAPALQGTGQLPKFEEDLFKITREGEADLYLIPTAEVSLTNIVSGEILDAKQLPLKFVAHTPCFRSEAGASGRDTRGMIRQHQFDKVEMVQIVAPEDSMAALESLTGNAERVLQLLELPYRTLALCTGDMGFSAVKTYDLEVWIPSQDKYREISSCSNCGDFQARRMQARWRNPETGKPELVHTLNGSGLAVGRTLVAVLENYQQADGSIRVPEVLKPYMGGLEVIG.

L-serine is bound at residue 233-235; it reads TAE. ATP is bound at residue 264–266; sequence RSE. Glu287 is a binding site for L-serine. 351-354 contacts ATP; that stretch reads EISS. L-serine is bound at residue Ser387.

Belongs to the class-II aminoacyl-tRNA synthetase family. Type-1 seryl-tRNA synthetase subfamily. Homodimer. The tRNA molecule binds across the dimer.

It localises to the cytoplasm. It carries out the reaction tRNA(Ser) + L-serine + ATP = L-seryl-tRNA(Ser) + AMP + diphosphate + H(+). The enzyme catalyses tRNA(Sec) + L-serine + ATP = L-seryl-tRNA(Sec) + AMP + diphosphate + H(+). The protein operates within aminoacyl-tRNA biosynthesis; selenocysteinyl-tRNA(Sec) biosynthesis; L-seryl-tRNA(Sec) from L-serine and tRNA(Sec): step 1/1. In terms of biological role, catalyzes the attachment of serine to tRNA(Ser). Is also able to aminoacylate tRNA(Sec) with serine, to form the misacylated tRNA L-seryl-tRNA(Sec), which will be further converted into selenocysteinyl-tRNA(Sec). In Pseudomonas savastanoi pv. phaseolicola (strain 1448A / Race 6) (Pseudomonas syringae pv. phaseolicola (strain 1448A / Race 6)), this protein is Serine--tRNA ligase.